The primary structure comprises 61 residues: Conotoxin Cal14.6 (61 aa).

Residues 1 to 21 (MKFLLFLSVALLLTSFIETEA) form the signal peptide. Residues 22-38 (GPVNEAGVERLFRALVG) constitute a propeptide that is removed on maturation. 4-hydroxyproline; partial is present on Pro-57. Pro-60 bears the Proline amide mark.

In terms of processing, contains 2 disulfide bonds. As to expression, expressed by the venom duct.

The protein resides in the secreted. Probable neurotoxin with unknown target. Possibly targets ion channels. In Californiconus californicus (California cone), this protein is Conotoxin Cal14.6.